A 513-amino-acid chain; its full sequence is ATP synthase subunit alpha (513 aa).

Position 169-176 (169-176 (GDRQVGKT)) interacts with ATP.

The protein belongs to the ATPase alpha/beta chains family. In terms of assembly, F-type ATPases have 2 components, CF(1) - the catalytic core - and CF(0) - the membrane proton channel. CF(1) has five subunits: alpha(3), beta(3), gamma(1), delta(1), epsilon(1). CF(0) has three main subunits: a(1), b(2) and c(9-12). The alpha and beta chains form an alternating ring which encloses part of the gamma chain. CF(1) is attached to CF(0) by a central stalk formed by the gamma and epsilon chains, while a peripheral stalk is formed by the delta and b chains.

The protein resides in the cell inner membrane. The enzyme catalyses ATP + H2O + 4 H(+)(in) = ADP + phosphate + 5 H(+)(out). Its function is as follows. Produces ATP from ADP in the presence of a proton gradient across the membrane. The alpha chain is a regulatory subunit. This Aeromonas hydrophila subsp. hydrophila (strain ATCC 7966 / DSM 30187 / BCRC 13018 / CCUG 14551 / JCM 1027 / KCTC 2358 / NCIMB 9240 / NCTC 8049) protein is ATP synthase subunit alpha.